We begin with the raw amino-acid sequence, 383 residues long: Large ribosomal subunit protein uL3 (383 aa).

This sequence belongs to the universal ribosomal protein uL3 family.

The protein resides in the cytoplasm. The protein is Large ribosomal subunit protein uL3 (RPL3-1) of Encephalitozoon cuniculi (strain GB-M1) (Microsporidian parasite).